A 118-amino-acid chain; its full sequence is Small ribosomal subunit protein bS6 (118 aa).

Belongs to the bacterial ribosomal protein bS6 family.

In terms of biological role, binds together with bS18 to 16S ribosomal RNA. The protein is Small ribosomal subunit protein bS6 of Orientia tsutsugamushi (strain Ikeda) (Rickettsia tsutsugamushi).